The sequence spans 312 residues: Porphobilinogen deaminase (312 aa).

At cysteine 243 the chain carries S-(dipyrrolylmethanemethyl)cysteine.

It belongs to the HMBS family. In terms of assembly, monomer. It depends on dipyrromethane as a cofactor.

It carries out the reaction 4 porphobilinogen + H2O = hydroxymethylbilane + 4 NH4(+). It participates in porphyrin-containing compound metabolism; protoporphyrin-IX biosynthesis; coproporphyrinogen-III from 5-aminolevulinate: step 2/4. Tetrapolymerization of the monopyrrole PBG into the hydroxymethylbilane pre-uroporphyrinogen in several discrete steps. This is Porphobilinogen deaminase from Vibrio parahaemolyticus serotype O3:K6 (strain RIMD 2210633).